The sequence spans 189 residues: Marginal zone B- and B1-cell-specific protein (189 aa).

The first 22 residues, 1-22 (MRLSLPLLLLLLGAWAIPGGLG), serve as a signal peptide directing secretion. Disulfide bonds link Cys50-Cys178, Cys53-Cys171, and Cys95-Cys143. The short motif at 186 to 189 (REEL) is the Prevents secretion from ER element.

Belongs to the MZB1 family. Part of the ER chaperone complex, a multi-protein complex in the endoplasmic reticulum containing a large number of molecular chaperones which associates with unassembled incompletely folded immunoglobulin heavy chains. Isoform 2 interacts with CASP2 and CASP9. Interacts with HSP90B1 and PDIA3 in a calcium-dependent manner. In terms of processing, forms an interchain disulfide bond with IgM monomers. In terms of tissue distribution, widely expressed with highest levels in adult brain, small intestine and lymphoid tissues such as thymus and spleen. Expression is frequently lower in intestinal-type gastric cancer. In obese patients, more abundant in omental than in subcutaneous fat.

The protein resides in the endoplasmic reticulum lumen. It localises to the secreted. It is found in the cytoplasm. In terms of biological role, associates with immunoglobulin M (IgM) heavy and light chains and promotes IgM assembly and secretion. May exert its effect by acting as a molecular chaperone or as an oxidoreductase as it displays a low level of oxidoreductase activity. Isoform 2 may be involved in regulation of apoptosis. Helps to diversify peripheral B-cell functions by regulating Ca(2+) stores, antibody secretion and integrin activation. Its function is as follows. Acts as a hormone-regulated adipokine/pro-inflammatory cytokine that is implicated in causing chronic inflammation, affecting cellular expansion and blunting insulin response in adipocytes. May have a role in the onset of insulin resistance. This chain is Marginal zone B- and B1-cell-specific protein (MZB1), found in Homo sapiens (Human).